Reading from the N-terminus, the 168-residue chain is Cyclin-dependent kinase 4 inhibitor C (168 aa).

ANK repeat units lie at residues 4–33 (PWGNELASAAARGDLEQLTSLLQNNVNVNA), 37–65 (FGRTALQVMKLGNPEIARRLLLRGANPNL), 69–98 (TGFAVIHDAARAGFLDTVQALLEFQADVNI), 102–132 (EGNLPLHLAAKEGHLPVVEFLMKHTACNVGH), and 136–165 (KGDTAFDLARFYGRNEVISLMEANGVGGAT).

This sequence belongs to the CDKN2 cyclin-dependent kinase inhibitor family. In terms of assembly, heterodimer of p18 with CDK6.

In terms of biological role, interacts strongly with CDK6, weakly with CDK4. Inhibits cell growth and proliferation with a correlated dependence on endogenous retinoblastoma protein RB. The sequence is that of Cyclin-dependent kinase 4 inhibitor C (Cdkn2c) from Mus musculus (Mouse).